The sequence spans 704 residues: Glycine--tRNA ligase beta subunit (704 aa).

The protein belongs to the class-II aminoacyl-tRNA synthetase family. In terms of assembly, tetramer of two alpha and two beta subunits.

Its subcellular location is the cytoplasm. The catalysed reaction is tRNA(Gly) + glycine + ATP = glycyl-tRNA(Gly) + AMP + diphosphate. This Rhizobium johnstonii (strain DSM 114642 / LMG 32736 / 3841) (Rhizobium leguminosarum bv. viciae) protein is Glycine--tRNA ligase beta subunit.